A 216-amino-acid polypeptide reads, in one-letter code: UPF0301 protein Nham_3550 (216 aa).

Basic residues predominate over residues methionine 1–threonine 10. Residues methionine 1–glutamine 25 form a disordered region.

It belongs to the UPF0301 (AlgH) family.

The polypeptide is UPF0301 protein Nham_3550 (Nitrobacter hamburgensis (strain DSM 10229 / NCIMB 13809 / X14)).